A 273-amino-acid chain; its full sequence is Anthranilate synthase beta subunit 2, chloroplastic (273 aa).

The N-terminal 36 residues, 1 to 36, are a transit peptide targeting the chloroplast; it reads MAATTLYNSCLLQPKYGFTTRRLNQSLVNSLTNPTR. Residues 71-270 enclose the Glutamine amidotransferase type-1 domain; it reads PIIVIDNYDS…IKLVEKKESE (200 aa). Residue C149 is the Nucleophile of the active site. Catalysis depends on residues H244 and E246.

As to quaternary structure, heterotetramer consisting of two non-identical subunits: a beta subunit and a large alpha subunit.

The protein resides in the plastid. Its subcellular location is the chloroplast. It catalyses the reaction chorismate + L-glutamine = anthranilate + pyruvate + L-glutamate + H(+). Its pathway is amino-acid biosynthesis; L-tryptophan biosynthesis; L-tryptophan from chorismate: step 1/5. With respect to regulation, feedback inhibition by tryptophan. Its function is as follows. Part of a heterotetrameric complex that catalyzes the two-step biosynthesis of anthranilate, an intermediate in the biosynthesis of L-tryptophan. In the first step, the glutamine-binding beta subunit of anthranilate synthase (AS) provides the glutamine amidotransferase activity which generates ammonia as a substrate that, along with chorismate, is used in the second step, catalyzed by the large alpha subunit of AS to produce anthranilate. The sequence is that of Anthranilate synthase beta subunit 2, chloroplastic (ASB2) from Arabidopsis thaliana (Mouse-ear cress).